The primary structure comprises 366 residues: Inactive PGL/p-HBAD biosynthesis glycosyltransferase Mb2982c (366 aa).

2 disordered regions span residues 1 to 23 and 295 to 366; these read MEET…PNAA and DGDR…HGGP. Basic and acidic residues predominate over residues 295 to 311; that stretch reads DGDRGHRWPEPPEERAG.

It belongs to the UDP-glycosyltransferase family.

The chain is Inactive PGL/p-HBAD biosynthesis glycosyltransferase Mb2982c from Mycobacterium bovis (strain ATCC BAA-935 / AF2122/97).